A 208-amino-acid polypeptide reads, in one-letter code: Small ribosomal subunit protein uS4 (208 aa).

The 61-residue stretch at 98–158 (GRLDNVVYRM…EKSKKQARIK (61 aa)) folds into the S4 RNA-binding domain.

The protein belongs to the universal ribosomal protein uS4 family. In terms of assembly, part of the 30S ribosomal subunit. Contacts protein S5. The interaction surface between S4 and S5 is involved in control of translational fidelity.

One of the primary rRNA binding proteins, it binds directly to 16S rRNA where it nucleates assembly of the body of the 30S subunit. Functionally, with S5 and S12 plays an important role in translational accuracy. The chain is Small ribosomal subunit protein uS4 from Actinobacillus pleuropneumoniae serotype 5b (strain L20).